Reading from the N-terminus, the 207-residue chain is Transcription factor DYT1 (207 aa).

A disordered region spans residues 1–38; it reads MGGGSRFQEPVRMSRRKQVTKEKEEDENFKSPNLEAER. The 50-residue stretch at 28–77 folds into the bHLH domain; that stretch reads NFKSPNLEAERRRREKLHCRLMALRSHVPIVTNMTKASIVEDAITYIGEL.

Homodimer. In terms of tissue distribution, mostly expressed in anthers, and, to a lower extent, in young inflorescences undergoing meiosis and siliques.

The protein localises to the nucleus. Transcription factor. Involved in the control of tapetum development. Required for male fertility and pollen differentiation, especially during callose deposition. The sequence is that of Transcription factor DYT1 from Arabidopsis thaliana (Mouse-ear cress).